We begin with the raw amino-acid sequence, 399 residues long: MDAATTTAGLSDLKFRLVRESFADAVSWVAKSLPSRPAVPVLSGVLLSGTDEGLTISGFDYEVSAEAQVAAEIASPGSVLVSGRLLSDIVRALPNKPIDFYVDGNRVALNCGSARFSLPTMAVEDYPTLPTLPEETGTLPADLFAEAIGQVAIAAGRDDTLPMLTGIRVEISGDTVVLAATDRFRLAVRELTWSAASPDIEAAVLVPAKTLAEAARTGIDGSDVRLSLGAGAGVGKDGLLGISGNGKRSTTRLLDAEFPKFRQLLPAEHTAVATINVAELTEAIKLVALVADRGAQVRMEFSEGSLRLSAGADDVGRAEEDLAVDFAGEPLTIAFNPTYLTDGLGSVRSERVSFGFTTPGKPALLRPASDDDSPPSGSGPFSALPTDYVYLLMPVRLPG.

It belongs to the beta sliding clamp family. In terms of assembly, forms a ring-shaped head-to-tail homodimer around DNA which binds and tethers DNA polymerases and other proteins to the DNA. The DNA replisome complex has a single clamp-loading complex (3 tau and 1 each of delta, delta', psi and chi subunits) which binds 3 Pol III cores (1 core on the leading strand and 2 on the lagging strand) each with a beta sliding clamp dimer. Additional proteins in the replisome are other copies of gamma, psi and chi, Ssb, DNA helicase and RNA primase.

It is found in the cytoplasm. Its function is as follows. Confers DNA tethering and processivity to DNA polymerases and other proteins. Acts as a clamp, forming a ring around DNA (a reaction catalyzed by the clamp-loading complex) which diffuses in an ATP-independent manner freely and bidirectionally along dsDNA. Initially characterized for its ability to contact the catalytic subunit of DNA polymerase III (Pol III), a complex, multichain enzyme responsible for most of the replicative synthesis in bacteria; Pol III exhibits 3'-5' exonuclease proofreading activity. The beta chain is required for initiation of replication as well as for processivity of DNA replication. The chain is Beta sliding clamp (dnaN) from Mycolicibacterium paratuberculosis (strain ATCC BAA-968 / K-10) (Mycobacterium paratuberculosis).